Here is a 370-residue protein sequence, read N- to C-terminus: Sensor protein GtcS (370 aa).

The next 2 membrane-spanning stretches (helical) occupy residues 2 to 22 and 40 to 60; these read ITAYILFTVTVGVTNSIVFYL and AWIVAWRLMEMVIFALSVYLY. Positions 66–118 constitute an HAMP domain; that stretch reads KRITGPLEKITDAIQKMREGEFAQRLCFKADYELTLIQEHFNEMVAHLEKTEA. Residues 133–355 enclose the Histidine kinase domain; that stretch reads DLSHDFKTPI…RLENDLPYRL (223 aa).

The protein localises to the cell membrane. It catalyses the reaction ATP + protein L-histidine = ADP + protein N-phospho-L-histidine.. Member of the two-component regulatory system GtcS/GtcR which may act in the control of the transcription of the grs operon which encodes the multienzymes involved in the biosynthesis of the peptide antibiotic gramicidin S. Probably activates GtcR by phosphorylation. This is Sensor protein GtcS (gtcS) from Aneurinibacillus migulanus (Bacillus migulanus).